A 484-amino-acid polypeptide reads, in one-letter code: E-selectin (484 aa).

Residues 1–22 form the signal peptide; that stretch reads MIASQFLSALPLVLLLLRESGA. A C-type lectin domain is found at 23-140; the sequence is WSYSASTETM…CSKKKLALCY (118 aa). Residues 23–429 are Extracellular-facing; sequence WSYSASTETM…CEAPAESKIP (407 aa). Disulfide bonds link cysteine 41–cysteine 139, cysteine 112–cysteine 131, cysteine 144–cysteine 155, cysteine 149–cysteine 164, cysteine 166–cysteine 175, cysteine 181–cysteine 222, cysteine 194–cysteine 204, cysteine 208–cysteine 235, cysteine 240–cysteine 285, cysteine 271–cysteine 298, cysteine 303–cysteine 348, cysteine 334–cysteine 361, cysteine 366–cysteine 407, and cysteine 393–cysteine 420. N-linked (GlcNAc...) asparagine glycosylation is found at asparagine 61, asparagine 65, and asparagine 79. Ca(2+) is bound by residues glutamate 102, asparagine 104, and glutamate 110. A carbohydrate-binding positions include 102 to 110, 114 to 119, and 127 to 129; these read EPNNKQSNE, EIYIKR, and NDE. Residues asparagine 127 and aspartate 128 each contribute to the Ca(2+) site. The EGF-like domain maps to 141–176; sequence TAACTPTSCSGHGECIETINSSTCQCYPGFRGLQCE. Asparagine 160 carries N-linked (GlcNAc...) asparagine glycosylation. Sushi domains lie at 179 to 237, 251 to 300, 301 to 363, and 364 to 422; these read VECD…TCKA, VSCN…VCKA, VKCP…SCQV, and VQCS…TCEA. The N-linked (GlcNAc...) asparagine glycan is linked to asparagine 201. An N-linked (GlcNAc...) asparagine glycan is attached at asparagine 254. 2 N-linked (GlcNAc...) asparagine glycosylation sites follow: asparagine 376 and asparagine 400. Residues 430 to 451 traverse the membrane as a helical segment; the sequence is LAMGLAAGGVSFMTSASFLLWL. Residues 452–484 are Cytoplasmic-facing; the sequence is LKRLRKRAKKFVPSSSSECLQPNGSYQMPSDLI.

It belongs to the selectin/LECAM family. As to quaternary structure, interacts with SELPLG/PSGL1 and PODXL2 through the sialyl Lewis X epitope. SELPLG sulfation appears not to be required for this interaction.

Its subcellular location is the cell membrane. Its function is as follows. Cell-surface glycoprotein having a role in immunoadhesion. Mediates in the adhesion of blood neutrophils in cytokine-activated endothelium through interaction with SELPLG/PSGL1. May have a role in capillary morphogenesis. The chain is E-selectin (SELE) from Sus scrofa (Pig).